The chain runs to 208 residues: Uracil phosphoribosyltransferase (208 aa).

Residues Arg78, Arg103, and 130 to 138 (DPMLATGGT) each bind 5-phospho-alpha-D-ribose 1-diphosphate. Uracil-binding positions include Ile193 and 198–200 (GDA). Residue Asp199 participates in 5-phospho-alpha-D-ribose 1-diphosphate binding.

The protein belongs to the UPRTase family. The cofactor is Mg(2+).

It carries out the reaction UMP + diphosphate = 5-phospho-alpha-D-ribose 1-diphosphate + uracil. It functions in the pathway pyrimidine metabolism; UMP biosynthesis via salvage pathway; UMP from uracil: step 1/1. Allosterically activated by GTP. Its function is as follows. Catalyzes the conversion of uracil and 5-phospho-alpha-D-ribose 1-diphosphate (PRPP) to UMP and diphosphate. The polypeptide is Uracil phosphoribosyltransferase (Solidesulfovibrio magneticus (strain ATCC 700980 / DSM 13731 / RS-1) (Desulfovibrio magneticus)).